The primary structure comprises 155 residues: 2-C-methyl-D-erythritol 2,4-cyclodiphosphate synthase (155 aa).

A divalent metal cation is bound by residues Asp8 and His10. 4-CDP-2-C-methyl-D-erythritol 2-phosphate-binding positions include 8–10 (DVH) and 34–35 (HS). His42 contacts a divalent metal cation. 4-CDP-2-C-methyl-D-erythritol 2-phosphate-binding positions include 56-58 (DIG), 61-65 (FPDKD), 132-135 (TTTE), and Arg142.

Belongs to the IspF family. In terms of assembly, homotrimer. A divalent metal cation serves as cofactor.

It catalyses the reaction 4-CDP-2-C-methyl-D-erythritol 2-phosphate = 2-C-methyl-D-erythritol 2,4-cyclic diphosphate + CMP. Its pathway is isoprenoid biosynthesis; isopentenyl diphosphate biosynthesis via DXP pathway; isopentenyl diphosphate from 1-deoxy-D-xylulose 5-phosphate: step 4/6. Its function is as follows. Involved in the biosynthesis of isopentenyl diphosphate (IPP) and dimethylallyl diphosphate (DMAPP), two major building blocks of isoprenoid compounds. Catalyzes the conversion of 4-diphosphocytidyl-2-C-methyl-D-erythritol 2-phosphate (CDP-ME2P) to 2-C-methyl-D-erythritol 2,4-cyclodiphosphate (ME-CPP) with a corresponding release of cytidine 5-monophosphate (CMP). This is 2-C-methyl-D-erythritol 2,4-cyclodiphosphate synthase from Desulfatibacillum aliphaticivorans.